Consider the following 377-residue polypeptide: Erythronate-4-phosphate dehydrogenase (377 aa).

Positions 45 and 67 each coordinate substrate. Residues 127–128, aspartate 147, and threonine 176 each bind NAD(+); that span reads QV. The active site involves arginine 209. Aspartate 233 serves as a coordination point for NAD(+). The active site involves glutamate 238. Histidine 255 (proton donor) is an active-site residue. Glycine 258 serves as a coordination point for NAD(+). A substrate-binding site is contributed by tyrosine 259.

It belongs to the D-isomer specific 2-hydroxyacid dehydrogenase family. PdxB subfamily. Homodimer.

The protein resides in the cytoplasm. The catalysed reaction is 4-phospho-D-erythronate + NAD(+) = (R)-3-hydroxy-2-oxo-4-phosphooxybutanoate + NADH + H(+). It functions in the pathway cofactor biosynthesis; pyridoxine 5'-phosphate biosynthesis; pyridoxine 5'-phosphate from D-erythrose 4-phosphate: step 2/5. Its function is as follows. Catalyzes the oxidation of erythronate-4-phosphate to 3-hydroxy-2-oxo-4-phosphonooxybutanoate. This Vibrio vulnificus (strain YJ016) protein is Erythronate-4-phosphate dehydrogenase.